Reading from the N-terminus, the 275-residue chain is Rhamnulose-1-phosphate aldolase (275 aa).

Glu-117 is a catalytic residue. The Zn(2+) site is built by His-141, His-143, and His-212.

The protein belongs to the aldolase class II family. RhaD subfamily. Homotetramer. Zn(2+) is required as a cofactor.

Its subcellular location is the cytoplasm. The enzyme catalyses L-rhamnulose 1-phosphate = (S)-lactaldehyde + dihydroxyacetone phosphate. Its pathway is carbohydrate degradation; L-rhamnose degradation; glycerone phosphate from L-rhamnose: step 3/3. In terms of biological role, catalyzes the reversible cleavage of L-rhamnulose-1-phosphate to dihydroxyacetone phosphate (DHAP) and L-lactaldehyde. This Salmonella paratyphi C (strain RKS4594) protein is Rhamnulose-1-phosphate aldolase.